A 187-amino-acid polypeptide reads, in one-letter code: Putative acyl-coenzyme A oxidase At3g06690 (187 aa).

The segment at methionine 1–proline 21 is disordered.

This sequence belongs to the acyl-CoA oxidase family.

The catalysed reaction is a 2,3-saturated acyl-CoA + O2 = a (2E)-enoyl-CoA + H2O2. The protein is Putative acyl-coenzyme A oxidase At3g06690 of Arabidopsis thaliana (Mouse-ear cress).